The following is a 413-amino-acid chain: MESDIKNETSFQELDMILTQYLETLSERKKYHIGYPINMCYEHHATLAPLLQFHLNNCGDPFTQHPTDFHSKDFEVAVLDWFAQLWEIEKDEYWGYITSGGTEGNLHGFWLGRRELLPNGYLYASKDSHYSIFKAARMYRMELQTINTLVNGEIDYEDLQSKLLVNKNKPAIININIGTTFKGAIDDLDFVIQTLENCGYSNDNYYIHCDRALCGLILPFIKHAKKITFKKPIGSISISGHKFLGCPMSCGVQITRRSYVSTLSKIEYINSADATISGSRNGFTPIFLWYCLSKKGHARLQQDSITCIENARYLKDRLLEAGISVMLNDFSITVVFERPCDHKFIRRWNLCCLRGMAHVVIMPGITRETIDSFFKDLMQERNYKWYQDVKALPPCLADDLALNCMCSNKKMHN.

Residue histidine 129 coordinates substrate. Lysine 242 carries the N6-(pyridoxal phosphate)lysine modification.

The protein belongs to the group II decarboxylase family. The cofactor is pyridoxal 5'-phosphate. Ripe fruits; not detected in leaves and unripe fruit.

The catalysed reaction is L-histidine + H(+) = histamine + CO2. This is Histidine decarboxylase (HDC) from Solanum lycopersicum (Tomato).